The chain runs to 245 residues: ATP synthase subunit b (245 aa).

A helical membrane pass occupies residues 3–23; that stretch reads SFNLLTIVSSIVNLLALAWII.

Belongs to the ATPase B chain family. As to quaternary structure, F-type ATPases have 2 components, F(1) - the catalytic core - and F(0) - the membrane proton channel. F(1) has five subunits: alpha(3), beta(3), gamma(1), delta(1), epsilon(1). F(0) has three main subunits: a(1), b(2) and c(10-14). The alpha and beta chains form an alternating ring which encloses part of the gamma chain. F(1) is attached to F(0) by a central stalk formed by the gamma and epsilon chains, while a peripheral stalk is formed by the delta and b chains.

The protein localises to the cell inner membrane. Functionally, f(1)F(0) ATP synthase produces ATP from ADP in the presence of a proton or sodium gradient. F-type ATPases consist of two structural domains, F(1) containing the extramembraneous catalytic core and F(0) containing the membrane proton channel, linked together by a central stalk and a peripheral stalk. During catalysis, ATP synthesis in the catalytic domain of F(1) is coupled via a rotary mechanism of the central stalk subunits to proton translocation. Component of the F(0) channel, it forms part of the peripheral stalk, linking F(1) to F(0). The polypeptide is ATP synthase subunit b (Dictyoglomus thermophilum (strain ATCC 35947 / DSM 3960 / H-6-12)).